The following is an 893-amino-acid chain: Serine/threonine-protein kinase PLK4 (893 aa).

The Protein kinase domain maps to 12 to 265 (FRVGNLLGKG…LSSVLDHPFM (254 aa)). Residues 18-26 (LGKGSFAGV) and Lys-41 each bind ATP. An N6-acetyllysine mark is found at Lys-45 and Lys-46. Asp-136 (proton acceptor) is an active-site residue. The span at 349 to 358 (NQEQETSNSG) shows a compositional bias: polar residues. Residues 349–393 (NQEQETSNSGRGRVIQEAEERPHSRYLRRAHSSDRSETSHGQSRV) form a disordered region. Positions 362 to 371 (VIQEAEERPH) are enriched in basic and acidic residues. Residues Ser-403 and Ser-588 each carry the phosphoserine modification. The region spanning 509–622 (TLRSITSPLT…SRFVQLVRSK (114 aa)) is the Cryptic POLO box 1 (CPB1) domain. The 114-residue stretch at 623-736 (SPKITYFTRY…GRRPSSTSSP (114 aa)) folds into the Cryptic POLO box 2 (CPB2) domain. Residues 730–749 (PSSTSSPKALTPPPPVDPNY) are disordered. The POLO box domain maps to 809 to 887 (QLLKSVFVKN…LSSILLMFSN (79 aa)).

This sequence belongs to the protein kinase superfamily. Ser/Thr protein kinase family. CDC5/Polo subfamily. Homodimer. Interacts with CEP152 (via N-terminus). Interacts with CEP78; this interaction may be important for proper PLK4 localization to the centriole and PLK4-induced overduplication of centrioles. Interacts with CEP131. Interacts simultaneously with TENT5C and CEP192. Interacts with TENT5C; this interaction leads to the TENT5C recruitment in the centrosome. Interacts with CEP85; this interaction may be important in cell migration and centriole assembly. In terms of processing, ubiquitinated; leading to its degradation by the proteasome. Post-translationally, tyrosine-phosphorylated by TEC. Acetylation by KAT2A and KAT2B impairs kinase activity by shifting the kinase to an inactive conformation.

It localises to the cytoplasm. Its subcellular location is the cytoskeleton. The protein resides in the microtubule organizing center. The protein localises to the centrosome. It is found in the centriole. It localises to the nucleus. Its subcellular location is the nucleolus. The protein resides in the cleavage furrow. It catalyses the reaction L-seryl-[protein] + ATP = O-phospho-L-seryl-[protein] + ADP + H(+). The catalysed reaction is L-threonyl-[protein] + ATP = O-phospho-L-threonyl-[protein] + ADP + H(+). In terms of biological role, serine/threonine-protein kinase that plays a central role in centriole duplication. Able to trigger procentriole formation on the surface of the parental centriole cylinder, leading to the recruitment of centriole biogenesis proteins such as SASS6, CPAP, CCP110, CEP135 and gamma-tubulin. When overexpressed, it is able to induce centrosome amplification through the simultaneous generation of multiple procentrioles adjoining each parental centriole during S phase. Phosphorylates 'Ser-151' of FBXW5 during the G1/S transition, leading to inhibit FBXW5 ability to ubiquitinate SASS6. Its central role in centriole replication suggests a possible role in tumorigenesis, centrosome aberrations being frequently observed in tumors. Also involved in deuterosome-mediated centriole amplification in multiciliated that can generate more than 100 centrioles. Also involved in trophoblast differentiation by phosphorylating HAND1, leading to disrupt the interaction between HAND1 and MDFIC and activate HAND1. Phosphorylates CDC25C and CHEK2. Required for the recruitment of STIL to the centriole and for STIL-mediated centriole amplification. Phosphorylates CEP131 and PCM1 which is essential for proper organization and integrity of centriolar satellites. This is Serine/threonine-protein kinase PLK4 from Bos taurus (Bovine).